The chain runs to 153 residues: Satratoxin biosynthesis SC2 cluster transcription factor SAT15 (153 aa).

Its subcellular location is the nucleus. Its function is as follows. Transcriptional regulator that may regulate the expression of the satratoxin biosynthesis SC2 cluster, one of the 3 clusters involved in the biosynthesis of satratoxins, trichothecene mycotoxins that are associated with human food poisonings. The protein is Satratoxin biosynthesis SC2 cluster transcription factor SAT15 of Stachybotrys chartarum (strain CBS 109288 / IBT 7711) (Toxic black mold).